Consider the following 52-residue polypeptide: UPF0391 membrane protein XOO4217 (52 aa).

The next 2 helical transmembrane spans lie at 5 to 25 and 27 to 47; these read AMIFFVIAIIAAVLGFSGIAG and ATNIAWILFVVFLILAVISMF.

This sequence belongs to the UPF0391 family.

The protein resides in the cell membrane. This Xanthomonas oryzae pv. oryzae (strain KACC10331 / KXO85) protein is UPF0391 membrane protein XOO4217.